Reading from the N-terminus, the 85-residue chain is Cell division topological specificity factor (85 aa).

This sequence belongs to the MinE family.

Functionally, prevents the cell division inhibition by proteins MinC and MinD at internal division sites while permitting inhibition at polar sites. This ensures cell division at the proper site by restricting the formation of a division septum at the midpoint of the long axis of the cell. This is Cell division topological specificity factor from Xanthomonas euvesicatoria pv. vesicatoria (strain 85-10) (Xanthomonas campestris pv. vesicatoria).